The following is a 502-amino-acid chain: Hippocampus abundant transcript-like protein 1 (502 aa).

The span at 1–12 (MNAEPPEEKAAS) shows a compositional bias: basic and acidic residues. Residues 1–27 (MNAEPPEEKAASEAEAGAMPEKRAGSR) are disordered. The Extracellular portion of the chain corresponds to 1-46 (MNAEPPEEKAASEAEAGAMPEKRAGSRAAGGNSLQGFGRPSVYHAA). A helical membrane pass occupies residues 47-67 (IVIFLEFFAWGLLTTSMLTVL). The Cytoplasmic segment spans residues 68 to 79 (HETFPQHTFLMN). Residues 80-100 (GLIQGVKGLLSFLSAPLIGAL) form a helical membrane-spanning segment. The Extracellular portion of the chain corresponds to 101–108 (SDVWGRKP). Residues 109 to 129 (FLLGTVFFTCFPIPLMRISPW) form a helical membrane-spanning segment. Residues 130-131 (WY) are Cytoplasmic-facing. The helical transmembrane segment at 132-152 (FAMISISGVFSVTFSVIFAYV) threads the bilayer. The Extracellular portion of the chain corresponds to 153–165 (ADVTQEHERSTAY). A helical membrane pass occupies residues 166 to 186 (GWVSATFAASLVSSPAIGAYL). Residues 187–193 (SASYGDS) lie on the Cytoplasmic side of the membrane. Residues 194–214 (LVVLVATVVALLDICFILLAV) form a helical membrane-spanning segment. Residues 215–248 (PESLPEKMRPLSWGARISWKQADPFASLKKVGKD) are Extracellular-facing. A helical membrane pass occupies residues 249 to 269 (STILLICITVFLSYLPEAGQY). Residues 270-278 (SSFFLYLRQ) lie on the Cytoplasmic side of the membrane. Residues 279-299 (VIGFGSIKIAAFIAMVGILSI) traverse the membrane as a helical segment. At 300–316 (VAQTVFLTSLMRSLGNK) the chain is on the extracellular side. The helical transmembrane segment at 317–337 (NTVLLGLGFQMFQLAWYGFGS) threads the bilayer. Position 338 (Q338) is a topological domain, cytoplasmic. A helical membrane pass occupies residues 339-359 (AWMMWAAGIVAAVSSITFPAV). The Extracellular portion of the chain corresponds to 360–384 (STLVSQNADSNQQGVAQGIITGIRG). Residues 385–405 (LCNGLGPALYGFIFYMFHVEL) form a helical membrane-spanning segment. The Cytoplasmic segment spans residues 406–425 (TELEPELISNNAALQGAVIP). The helical transmembrane segment at 426–446 (GPPFLFGACIVFMSFLVAVFI) threads the bilayer. The Extracellular segment spans residues 447–502 (PEYSKGGIQKHSNSISGSLANTPERGSDEDIEPLLQDSSIWELSSLEEPGHQCTEL).

The protein belongs to the major facilitator superfamily.

It is found in the membrane. The protein is Hippocampus abundant transcript-like protein 1 of Bos taurus (Bovine).